The primary structure comprises 291 residues: MKRIALFLATNLAVMIVFSIVLNIVYAVTGIQQGSLSGLLVMAVLFGFGGSLISLMMSKSMALRSVGGEVIEQPRNETEHWLLETVSRQAQQVGIGMPTVAIYDSPDMNAFATGAKRDDSLVAVSTGLLHSMTRDEAEAVLAHEVSHIANGDMITMTLMQGVVNTFVIFLSRMIANAVSGFTSSDEEGEGEGGSFMTYFIVSTVLELAFGFLASFLTMWFSRHREFHADAGAAQLVGKQKMIAALERLRMGQESQLEGSMMAFGINGKKSLTELLMSHPPLEKRIDALRQM.

Helical transmembrane passes span 4-24 and 36-56; these read IALF…VLNI and LSGL…ISLM. Histidine 143 contributes to the Zn(2+) binding site. Glutamate 144 is a catalytic residue. Residue histidine 147 participates in Zn(2+) binding. 2 helical membrane passes run 151 to 171 and 199 to 219; these read GDMI…IFLS and FIVS…LTMW. Glutamate 225 serves as a coordination point for Zn(2+).

The protein belongs to the peptidase M48B family. It depends on Zn(2+) as a cofactor.

The protein localises to the cell inner membrane. The protein is Protease HtpX of Aliivibrio fischeri (strain ATCC 700601 / ES114) (Vibrio fischeri).